We begin with the raw amino-acid sequence, 431 residues long: C2H2 type master regulator of conidiophore development brlA (431 aa).

Disordered stretches follow at residues 29–51, 211–275, and 287–306; these read MTSS…SHGS, TPQQ…SEEY, and IRTH…VRSN. Positions 30–48 are enriched in low complexity; the sequence is TSSFSPLESPTPTPTSLYS. Residues 225-265 are compositionally biased toward polar residues; the sequence is PSSNYSDFPASLQTFKPHTPSTPVRSLSLGTPRSDTPQSRM. Basic residues predominate over residues 287-302; that stretch reads IRTHRQPSRKPSKKQL. C2H2-type zinc fingers lie at residues 321–345 and 351–376; these read FKCK…MKSH and HVCW…TKTH. The disordered stretch occupies residues 390-412; sequence DETSPDYDPEFRGQLTPDGRPIY.

The protein localises to the nucleus. BrlA, abaA and wetA are pivotal regulators of conidiophore development and conidium maturation. They act individually and together to regulate their own expression and that of numerous other sporulation-specific genes. Binds promoters of target genes at brlA response elements (BREs) containing the conserved sequence 5'-(C/A)(A/G)AGGG(G/A)-3'. Regulates the expression levels of seven secondary metabolism gene clusters including a down-regulated cluster putatively involved in the biosynthesis of the mycotoxins roquefortine C and meleagrin. Negatively regulates the expression of cellulase genes. This is C2H2 type master regulator of conidiophore development brlA from Penicillium oxalicum (strain 114-2 / CGMCC 5302) (Penicillium decumbens).